We begin with the raw amino-acid sequence, 332 residues long: Glycerol-3-phosphate dehydrogenase [NAD(P)+] (332 aa).

Positions 11, 12, 32, and 106 each coordinate NADPH. The sn-glycerol 3-phosphate site is built by K106, G137, and S139. An NADPH-binding site is contributed by A141. Positions 192, 245, 255, 256, and 257 each coordinate sn-glycerol 3-phosphate. K192 acts as the Proton acceptor in catalysis. R256 provides a ligand contact to NADPH. NADPH is bound by residues V280 and E282.

This sequence belongs to the NAD-dependent glycerol-3-phosphate dehydrogenase family.

The protein localises to the cytoplasm. The catalysed reaction is sn-glycerol 3-phosphate + NAD(+) = dihydroxyacetone phosphate + NADH + H(+). The enzyme catalyses sn-glycerol 3-phosphate + NADP(+) = dihydroxyacetone phosphate + NADPH + H(+). It participates in membrane lipid metabolism; glycerophospholipid metabolism. Functionally, catalyzes the reduction of the glycolytic intermediate dihydroxyacetone phosphate (DHAP) to sn-glycerol 3-phosphate (G3P), the key precursor for phospholipid synthesis. This Staphylococcus epidermidis (strain ATCC 12228 / FDA PCI 1200) protein is Glycerol-3-phosphate dehydrogenase [NAD(P)+].